The sequence spans 290 residues: Phycobilisome 32.3 kDa linker polypeptide, phycocyanin-associated, rod (290 aa).

The PBS-linker domain maps to 1-179 (MPVTVAASRL…LQRGYANSDR (179 aa)). Positions 236–288 (DQVVRVEVAALSTPRYPRIRRSSRVFFVPVSRLSQKLQEIQRMGGRVASISPA) constitute a CpcD-like domain.

This sequence belongs to the phycobilisome linker protein family.

It localises to the cellular thylakoid membrane. Functionally, rod linker protein, associated with phycocyanin. Linker polypeptides determine the state of aggregation and the location of the disk-shaped phycobiliprotein units within the phycobilisome and modulate their spectroscopic properties in order to mediate a directed and optimal energy transfer. The polypeptide is Phycobilisome 32.3 kDa linker polypeptide, phycocyanin-associated, rod (cpcC) (Picosynechococcus sp. (strain ATCC 27264 / PCC 7002 / PR-6) (Agmenellum quadruplicatum)).